A 175-amino-acid polypeptide reads, in one-letter code: Large ribosomal subunit protein uL10 (175 aa).

This sequence belongs to the universal ribosomal protein uL10 family. In terms of assembly, part of the ribosomal stalk of the 50S ribosomal subunit. The N-terminus interacts with L11 and the large rRNA to form the base of the stalk. The C-terminus forms an elongated spine to which L12 dimers bind in a sequential fashion forming a multimeric L10(L12)X complex.

Its function is as follows. Forms part of the ribosomal stalk, playing a central role in the interaction of the ribosome with GTP-bound translation factors. This Delftia acidovorans (strain DSM 14801 / SPH-1) protein is Large ribosomal subunit protein uL10.